Reading from the N-terminus, the 327-residue chain is Annexin A8-like protein 1 (327 aa).

Annexin repeat units follow at residues 21–92 (FNPD…ALMY), 93–164 (PPYR…CLLQ), 177–249 (ALAL…TVVK), and 253–324 (NLHS…SLVG). Residues methionine 266, glycine 268, glycine 270, and aspartate 310 each contribute to the Ca(2+) site.

This sequence belongs to the annexin family.

The polypeptide is Annexin A8-like protein 1 (Homo sapiens (Human)).